Reading from the N-terminus, the 421-residue chain is UDP-N-acetylglucosamine 1-carboxyvinyltransferase (421 aa).

22-23 lines the phosphoenolpyruvate pocket; that stretch reads KN. Arginine 92 contributes to the UDP-N-acetyl-alpha-D-glucosamine binding site. Residue cysteine 116 is the Proton donor of the active site. Cysteine 116 carries the post-translational modification 2-(S-cysteinyl)pyruvic acid O-phosphothioketal. UDP-N-acetyl-alpha-D-glucosamine-binding residues include aspartate 306 and valine 328.

The protein belongs to the EPSP synthase family. MurA subfamily.

Its subcellular location is the cytoplasm. The catalysed reaction is phosphoenolpyruvate + UDP-N-acetyl-alpha-D-glucosamine = UDP-N-acetyl-3-O-(1-carboxyvinyl)-alpha-D-glucosamine + phosphate. It participates in cell wall biogenesis; peptidoglycan biosynthesis. Its function is as follows. Cell wall formation. Adds enolpyruvyl to UDP-N-acetylglucosamine. The protein is UDP-N-acetylglucosamine 1-carboxyvinyltransferase of Thermotoga maritima (strain ATCC 43589 / DSM 3109 / JCM 10099 / NBRC 100826 / MSB8).